Here is a 250-residue protein sequence, read N- to C-terminus: Ribonuclease PH (250 aa).

Residues Arg-86 and 124-126 (GTR) each bind phosphate.

It belongs to the RNase PH family. Homohexameric ring arranged as a trimer of dimers.

The enzyme catalyses tRNA(n+1) + phosphate = tRNA(n) + a ribonucleoside 5'-diphosphate. Functionally, phosphorolytic 3'-5' exoribonuclease that plays an important role in tRNA 3'-end maturation. Removes nucleotide residues following the 3'-CCA terminus of tRNAs; can also add nucleotides to the ends of RNA molecules by using nucleoside diphosphates as substrates, but this may not be physiologically important. Probably plays a role in initiation of 16S rRNA degradation (leading to ribosome degradation) during starvation. The chain is Ribonuclease PH from Exiguobacterium sibiricum (strain DSM 17290 / CCUG 55495 / CIP 109462 / JCM 13490 / 255-15).